Consider the following 991-residue polypeptide: Translation initiation factor IF-2 (991 aa).

Disordered regions lie at residues 53–85, 97–175, and 312–395; these read SHGTSGADRKKITLTKKSTSEIKQADASGKART, VKRD…EAAE, and GIKG…DRGG. Composition is skewed to basic and acidic residues over residues 97-113 and 125-175; these read VKRDDPTGASSESHDSQ and ELQR…EAAE. The span at 323–338 shows a compositional bias: low complexity; the sequence is AAGAPAPGAAPGAAAK. Over residues 339-349 the composition is skewed to basic and acidic residues; the sequence is PGEKKSVKSEK. One can recognise a tr-type G domain in the interval 491-658; that stretch reads PRPPVVTVMG…QVLLQAEVLE (168 aa). The interval 500–507 is G1; the sequence is GHVDHGKT. 500–507 is a binding site for GTP; that stretch reads GHVDHGKT. The G2 stretch occupies residues 525–529; the sequence is GITQH. The tract at residues 546 to 549 is G3; it reads DTPG. GTP is bound by residues 546–550 and 600–603; these read DTPGH and NKID. Positions 600–603 are G4; that stretch reads NKID. Residues 636–638 are G5; it reads SAK.

It belongs to the TRAFAC class translation factor GTPase superfamily. Classic translation factor GTPase family. IF-2 subfamily.

The protein localises to the cytoplasm. Its function is as follows. One of the essential components for the initiation of protein synthesis. Protects formylmethionyl-tRNA from spontaneous hydrolysis and promotes its binding to the 30S ribosomal subunits. Also involved in the hydrolysis of GTP during the formation of the 70S ribosomal complex. The polypeptide is Translation initiation factor IF-2 (Leptothrix cholodnii (strain ATCC 51168 / LMG 8142 / SP-6) (Leptothrix discophora (strain SP-6))).